A 405-amino-acid polypeptide reads, in one-letter code: Putative arsenical pump-driving ATPase (405 aa).

8-15 (GKGGVGKT) serves as a coordination point for ATP.

It belongs to the arsA ATPase family.

The catalysed reaction is arsenite(in) + ATP + H2O = arsenite(out) + ADP + phosphate + H(+). Its function is as follows. Anion-transporting ATPase. Catalyzes the extrusion of arsenite. This is Putative arsenical pump-driving ATPase from Prosthecochloris vibrioformis (Chlorobium vibrioforme).